Consider the following 957-residue polypeptide: Glycine dehydrogenase (decarboxylating) (957 aa).

Lys708 carries the N6-(pyridoxal phosphate)lysine modification.

It belongs to the GcvP family. In terms of assembly, the glycine cleavage system is composed of four proteins: P, T, L and H. It depends on pyridoxal 5'-phosphate as a cofactor.

It catalyses the reaction N(6)-[(R)-lipoyl]-L-lysyl-[glycine-cleavage complex H protein] + glycine + H(+) = N(6)-[(R)-S(8)-aminomethyldihydrolipoyl]-L-lysyl-[glycine-cleavage complex H protein] + CO2. The glycine cleavage system catalyzes the degradation of glycine. The P protein binds the alpha-amino group of glycine through its pyridoxal phosphate cofactor; CO(2) is released and the remaining methylamine moiety is then transferred to the lipoamide cofactor of the H protein. This Escherichia coli (strain ATCC 8739 / DSM 1576 / NBRC 3972 / NCIMB 8545 / WDCM 00012 / Crooks) protein is Glycine dehydrogenase (decarboxylating).